Here is a 383-residue protein sequence, read N- to C-terminus: MKLSDFDFNLPSALIAQYPSSERDNSDLLIAGTKHIKTKFYNIIDYLKKGDLLVFNNSKVIKAKLHLGKNITINLNKKLSDNCWIAFAKPARKLNIGDEFYFDTHKIIITEKLAIGEIKVKFMLDNISIIKFLDKYGEIPLPFYIKRPSPVCYSNMALCCKPENTLKIKSIPHNMSKIVTNNSNTVNLRSNDGIIDSTNDNDRYQTIYSQIEGSVAAPTAGLHFTKNILDKLKTKGVHTAFVTLHVGAGTFLPVKTENIHEHKMHTEYCSITTETAEIINKTKQEGRSIIAVGTTTLRTIESACNNGIVRAGNFETDIFITPGFNFQVVDMLLTNFHFPKSTLFILICAFAGFKEMHALYKYAIKEKMRFFSYGDATLLYRKV.

It belongs to the QueA family. Monomer.

The protein localises to the cytoplasm. It carries out the reaction 7-aminomethyl-7-carbaguanosine(34) in tRNA + S-adenosyl-L-methionine = epoxyqueuosine(34) in tRNA + adenine + L-methionine + 2 H(+). It functions in the pathway tRNA modification; tRNA-queuosine biosynthesis. Functionally, transfers and isomerizes the ribose moiety from AdoMet to the 7-aminomethyl group of 7-deazaguanine (preQ1-tRNA) to give epoxyqueuosine (oQ-tRNA). In Rickettsia prowazekii (strain Madrid E), this protein is S-adenosylmethionine:tRNA ribosyltransferase-isomerase.